The chain runs to 105 residues: Heat shock protein HspQ (105 aa).

The protein belongs to the HspQ family.

Its subcellular location is the cytoplasm. Involved in the degradation of certain denaturated proteins, including DnaA, during heat shock stress. In Sodalis glossinidius (strain morsitans), this protein is Heat shock protein HspQ.